A 299-amino-acid chain; its full sequence is Ribosomal protein L11 methyltransferase (299 aa).

T152, G172, D194, and N234 together coordinate S-adenosyl-L-methionine.

It belongs to the methyltransferase superfamily. PrmA family.

Its subcellular location is the cytoplasm. It catalyses the reaction L-lysyl-[protein] + 3 S-adenosyl-L-methionine = N(6),N(6),N(6)-trimethyl-L-lysyl-[protein] + 3 S-adenosyl-L-homocysteine + 3 H(+). Its function is as follows. Methylates ribosomal protein L11. This chain is Ribosomal protein L11 methyltransferase, found in Geobacter sulfurreducens (strain ATCC 51573 / DSM 12127 / PCA).